We begin with the raw amino-acid sequence, 209 residues long: Redox-sensing transcriptional repressor Rex (209 aa).

The segment at residues 16 to 55 is a DNA-binding region (H-T-H motif); sequence LYYRFIQNLSLSGKQRVSSAELSEAVKVDSATIRRDFSYF. 90–95 is an NAD(+) binding site; sequence GVGNLG.

Belongs to the transcriptional regulatory Rex family. In terms of assembly, homodimer.

The protein resides in the cytoplasm. Modulates transcription in response to changes in cellular NADH/NAD(+) redox state. This is Redox-sensing transcriptional repressor Rex from Bacillus thuringiensis (strain Al Hakam).